The following is a 371-amino-acid chain: Aminomethyltransferase (371 aa).

Belongs to the GcvT family. As to quaternary structure, the glycine cleavage system is composed of four proteins: P, T, L and H.

The catalysed reaction is N(6)-[(R)-S(8)-aminomethyldihydrolipoyl]-L-lysyl-[protein] + (6S)-5,6,7,8-tetrahydrofolate = N(6)-[(R)-dihydrolipoyl]-L-lysyl-[protein] + (6R)-5,10-methylene-5,6,7,8-tetrahydrofolate + NH4(+). In terms of biological role, the glycine cleavage system catalyzes the degradation of glycine. The protein is Aminomethyltransferase of Cellvibrio japonicus (strain Ueda107) (Pseudomonas fluorescens subsp. cellulosa).